The chain runs to 338 residues: RNA 3'-terminal phosphate cyclase (338 aa).

Residues Gln-103 and 283–287 contribute to the ATP site; that span reads YLADQ. The active-site Tele-AMP-histidine intermediate is the His-308.

This sequence belongs to the RNA 3'-terminal cyclase family. Type 1 subfamily.

The protein resides in the cytoplasm. It carries out the reaction a 3'-end 3'-phospho-ribonucleotide-RNA + ATP = a 3'-end 2',3'-cyclophospho-ribonucleotide-RNA + AMP + diphosphate. Its function is as follows. Catalyzes the conversion of 3'-phosphate to a 2',3'-cyclic phosphodiester at the end of RNA. The mechanism of action of the enzyme occurs in 3 steps: (A) adenylation of the enzyme by ATP; (B) transfer of adenylate to an RNA-N3'P to produce RNA-N3'PP5'A; (C) and attack of the adjacent 2'-hydroxyl on the 3'-phosphorus in the diester linkage to produce the cyclic end product. The biological role of this enzyme is unknown but it is likely to function in some aspects of cellular RNA processing. This Escherichia coli O9:H4 (strain HS) protein is RNA 3'-terminal phosphate cyclase.